Reading from the N-terminus, the 454-residue chain is Tubulin alpha-A chain (454 aa).

Positions 12, 72, 141, 145, 146, 180, 207, and 229 each coordinate GTP. Position 72 (Asp72) interacts with Mg(2+). The active site involves Glu255.

This sequence belongs to the tubulin family. As to quaternary structure, dimer of alpha and beta chains. A typical microtubule is a hollow water-filled tube with an outer diameter of 25 nm and an inner diameter of 15 nM. Alpha-beta heterodimers associate head-to-tail to form protofilaments running lengthwise along the microtubule wall with the beta-tubulin subunit facing the microtubule plus end conferring a structural polarity. Microtubules usually have 13 protofilaments but different protofilament numbers can be found in some organisms and specialized cells. Mg(2+) serves as cofactor.

The protein resides in the cytoplasm. Its subcellular location is the cytoskeleton. The enzyme catalyses GTP + H2O = GDP + phosphate + H(+). Tubulin is the major constituent of microtubules, a cylinder consisting of laterally associated linear protofilaments composed of alpha- and beta-tubulin heterodimers. Microtubules grow by the addition of GTP-tubulin dimers to the microtubule end, where a stabilizing cap forms. Below the cap, tubulin dimers are in GDP-bound state, owing to GTPase activity of alpha-tubulin. The chain is Tubulin alpha-A chain (tba-1) from Neurospora crassa (strain ATCC 24698 / 74-OR23-1A / CBS 708.71 / DSM 1257 / FGSC 987).